Reading from the N-terminus, the 259-residue chain is Thiazole synthase (259 aa).

The active-site Schiff-base intermediate with DXP is Lys-98. Residues Gly-159, 185 to 186, and 207 to 208 contribute to the 1-deoxy-D-xylulose 5-phosphate site; these read AG and NS.

The protein belongs to the ThiG family. Homotetramer. Forms heterodimers with either ThiH or ThiS.

Its subcellular location is the cytoplasm. It carries out the reaction [ThiS sulfur-carrier protein]-C-terminal-Gly-aminoethanethioate + 2-iminoacetate + 1-deoxy-D-xylulose 5-phosphate = [ThiS sulfur-carrier protein]-C-terminal Gly-Gly + 2-[(2R,5Z)-2-carboxy-4-methylthiazol-5(2H)-ylidene]ethyl phosphate + 2 H2O + H(+). Its pathway is cofactor biosynthesis; thiamine diphosphate biosynthesis. Catalyzes the rearrangement of 1-deoxy-D-xylulose 5-phosphate (DXP) to produce the thiazole phosphate moiety of thiamine. Sulfur is provided by the thiocarboxylate moiety of the carrier protein ThiS. In vitro, sulfur can be provided by H(2)S. The polypeptide is Thiazole synthase (Chlorobaculum tepidum (strain ATCC 49652 / DSM 12025 / NBRC 103806 / TLS) (Chlorobium tepidum)).